We begin with the raw amino-acid sequence, 102 residues long: Small ribosomal subunit protein uS10 (102 aa).

Belongs to the universal ribosomal protein uS10 family. In terms of assembly, part of the 30S ribosomal subunit.

Involved in the binding of tRNA to the ribosomes. In Clostridium kluyveri (strain NBRC 12016), this protein is Small ribosomal subunit protein uS10.